We begin with the raw amino-acid sequence, 239 residues long: 4-hydroxy-tetrahydrodipicolinate reductase (239 aa).

NAD(+) is bound by residues 8–13 (GSTGKM), 78–80 (GTT), and 102–105 (SANM). His134 acts as the Proton donor/acceptor in catalysis. Residue His135 coordinates (S)-2,3,4,5-tetrahydrodipicolinate. Lys138 (proton donor) is an active-site residue. 144–145 (GT) serves as a coordination point for (S)-2,3,4,5-tetrahydrodipicolinate.

This sequence belongs to the DapB family.

Its subcellular location is the cytoplasm. The catalysed reaction is (S)-2,3,4,5-tetrahydrodipicolinate + NAD(+) + H2O = (2S,4S)-4-hydroxy-2,3,4,5-tetrahydrodipicolinate + NADH + H(+). It catalyses the reaction (S)-2,3,4,5-tetrahydrodipicolinate + NADP(+) + H2O = (2S,4S)-4-hydroxy-2,3,4,5-tetrahydrodipicolinate + NADPH + H(+). Its pathway is amino-acid biosynthesis; L-lysine biosynthesis via DAP pathway; (S)-tetrahydrodipicolinate from L-aspartate: step 4/4. Functionally, catalyzes the conversion of 4-hydroxy-tetrahydrodipicolinate (HTPA) to tetrahydrodipicolinate. This is 4-hydroxy-tetrahydrodipicolinate reductase from Rickettsia peacockii (strain Rustic).